The chain runs to 418 residues: Lactosylceramide alpha-2,3-sialyltransferase (418 aa).

Positions 1–25 (MRTKAAGCAERRPLQPRTEAAAAPA) are disordered. The Cytoplasmic segment spans residues 1–61 (MRTKAAGCAE…RAQSKMRRPS (61 aa)). Residues 62–82 (LLLKDILKCTLLVFGVWILYI) traverse the membrane as a helical; Signal-anchor for type II membrane protein segment. Residues 83–418 (LKLNYTTEEC…DLSGGIDREF (336 aa)) are Lumenal-facing. Asparagine 86, asparagine 236, and asparagine 390 each carry an N-linked (GlcNAc...) asparagine glycan. Cysteines 195 and 353 form a disulfide.

The protein belongs to the glycosyltransferase 29 family. In terms of processing, N-glycosylated. Ubiquitous. High expression in brain, skeletal muscle, placenta, and testis. mRNA widely distributed in human brain, but slightly elevated expression was observed in the cerebral cortex, temporal lobe, and putamen.

The protein localises to the golgi apparatus membrane. It catalyses the reaction a beta-D-Gal-(1-&gt;4)-beta-D-Glc-(1&lt;-&gt;1)-Cer(d18:1(4E)) + CMP-N-acetyl-beta-neuraminate = a ganglioside GM3 (d18:1(4E)) + CMP + H(+). The catalysed reaction is ganglioside GA2 (d18:1(4E)/18:0) + CMP-N-acetyl-beta-neuraminate = ganglioside GM2 (d18:1(4E)/18:0) + CMP + H(+). It carries out the reaction a beta-D-Gal-(1&lt;-&gt;1')-ceramide + CMP-N-acetyl-beta-neuraminate = N-acetyl-alpha-neuraminosyl-(2-&gt;3)-beta-D-galactosyl-(1&lt;-&gt;1')-ceramide + CMP + H(+). The enzyme catalyses a beta-D-galactosyl-(1&lt;-&gt;1')-N-acylsphing-4-enine + CMP-N-acetyl-beta-neuraminate = a ganglioside GM4 (d18:1(4E)) + CMP + H(+). It catalyses the reaction ganglioside GA1 (d18:1(4E)/18:0) + CMP-N-acetyl-beta-neuraminate = ganglioside GM1 (d18:1(4E)/18:0) + CMP + H(+). It functions in the pathway glycolipid biosynthesis. Functionally, transfers the sialyl group (N-acetyl-alpha-neuraminyl or NeuAc) from CMP-NeuAc to the non-reducing terminal galactose (Gal) of glycosphingolipids forming gangliosides (important molecules involved in the regulation of multiple cellular processes, including cell proliferation and differentiation, apoptosis, embryogenesis, development, and oncogenesis). Mainly involved in the biosynthesis of ganglioside GM3 but can also use different glycolipids as substrate acceptors such as D-galactosylceramide (GalCer), asialo-GM2 (GA2) and asialo-GM1 (GA1), although less preferentially than beta-D-Gal-(1-&gt;4)-beta-D-Glc-(1&lt;-&gt;1)-Cer (LacCer). This Homo sapiens (Human) protein is Lactosylceramide alpha-2,3-sialyltransferase (ST3GAL5).